We begin with the raw amino-acid sequence, 317 residues long: Transaldolase (317 aa).

The active-site Schiff-base intermediate with substrate is the lysine 126.

It belongs to the transaldolase family. Type 1 subfamily. In terms of assembly, homodimer.

It localises to the cytoplasm. It catalyses the reaction D-sedoheptulose 7-phosphate + D-glyceraldehyde 3-phosphate = D-erythrose 4-phosphate + beta-D-fructose 6-phosphate. Its pathway is carbohydrate degradation; pentose phosphate pathway; D-glyceraldehyde 3-phosphate and beta-D-fructose 6-phosphate from D-ribose 5-phosphate and D-xylulose 5-phosphate (non-oxidative stage): step 2/3. Functionally, transaldolase is important for the balance of metabolites in the pentose-phosphate pathway. This Burkholderia cenocepacia (strain ATCC BAA-245 / DSM 16553 / LMG 16656 / NCTC 13227 / J2315 / CF5610) (Burkholderia cepacia (strain J2315)) protein is Transaldolase.